The sequence spans 641 residues: Chaperone protein DnaK (641 aa).

Residue Thr201 is modified to Phosphothreonine; by autocatalysis. Over residues 604–622 the composition is skewed to low complexity; it reads ASAEQGGAAPGADAGNAGK. The interval 604 to 625 is disordered; that stretch reads ASAEQGGAAPGADAGNAGKAQD.

It belongs to the heat shock protein 70 family.

Acts as a chaperone. This Stenotrophomonas maltophilia (strain R551-3) protein is Chaperone protein DnaK.